The sequence spans 199 residues: Transcriptional regulatory protein EntR (199 aa).

The 122-residue stretch at 3–124 folds into the Response regulatory domain; the sequence is KILVIDRCHF…TLSHTIQEAL (122 aa). Aspartate 8 carries the post-translational modification 4-aspartylphosphate. The HTH luxR-type domain maps to 133–198; that stretch reads PKNATPLLTP…SPFLSLPGKG (66 aa). The H-T-H motif DNA-binding region spans 157-176; that stretch reads NNAIAAALSIHGKTVYTYKR.

May serve to repress the entericidin locus in C.freundii. The sequence is that of Transcriptional regulatory protein EntR (ecnR) from Citrobacter freundii.